The primary structure comprises 209 residues: Glycine cleavage system H-like protein gcvH4 (209 aa).

Positions 35 to 51 (NNNNNNNNNNNNNNNNN) are enriched in low complexity. The disordered stretch occupies residues 35–56 (NNNNNNNNNNNNNNNNNRNKKL). A Lipoyl-binding domain is found at 73 to 159 (FATIGITNYV…KTTTTTTKIK (87 aa)).

Belongs to the GcvH family.

The sequence is that of Glycine cleavage system H-like protein gcvH4 (gcvH4) from Dictyostelium discoideum (Social amoeba).